A 169-amino-acid polypeptide reads, in one-letter code: UPF0725 protein At2g19200 (169 aa).

It belongs to the UPF0725 (EMB2204) family.

This Arabidopsis thaliana (Mouse-ear cress) protein is UPF0725 protein At2g19200.